Reading from the N-terminus, the 21-residue chain is Cytoplasmic filament protein A (21 aa).

Positions 1–21 are disordered; that stretch reads AILELPQSPNVFHPEKPSAVG.

The protein localises to the cytoplasm. Its function is as follows. Component of the cytoplasmic filaments that run the length of the organism just underneath the cytoplasmic membrane. The polypeptide is Cytoplasmic filament protein A (cfpA) (Treponema phagedenis).